The chain runs to 151 residues: UPAR/Ly6 domain-containing protein crok (151 aa).

The signal sequence occupies residues 1-23; that stretch reads MKTLEKYILFAIVLCCLLQLGQA. Residues 24–128 are Lumenal-facing; the sequence is IKCWDCRSDN…KDGCNSAGIH (105 aa). 5 disulfides stabilise this stretch: Cys26–Cys68, Cys29–Cys37, Cys51–Cys85, Cys100–Cys114, and Cys116–Cys122. Asn43 carries an N-linked (GlcNAc...) asparagine glycan. Ser124 carries the GPI-anchor amidated serine lipid modification. Positions 125 to 151 are cleaved as a propeptide — removed in mature form; sequence AGIHRLGLMGVLTGTLLSVIVAHLLRQ. The chain crosses the membrane as a helical span at residues 129-149; the sequence is RLGLMGVLTGTLLSVIVAHLL. Residues 150–151 lie on the Cytoplasmic side of the membrane; sequence RQ.

The protein belongs to the quiver family.

It is found in the vesicle. The protein localises to the membrane. The protein resides in the endomembrane system. Required for septate junction assembly, possibly by organizing the preassembly and transport of septate junction proteins including dlg1/disks large 1 and Nrx-IV/Neurexin-IV. Involved in paracellular barrier functions of trachea, hindgut and salivary gland mediated by epithelial cell septate junctions. In Drosophila melanogaster (Fruit fly), this protein is UPAR/Ly6 domain-containing protein crok.